Reading from the N-terminus, the 681-residue chain is 2-(S-pantetheinyl)-carbapenam-3-carboxylate methyltransferase (681 aa).

In terms of domain architecture, B12-binding spans 1-144 (MTVPAARSGR…IERLADHPDY (144 aa)). Positions 18, 72, 74, 75, 103, 126, and 127 each coordinate cob(II)alamin. The region spanning 192–417 (RDLRFYALWE…RLYVEEPGTP (226 aa)) is the Radical SAM core domain. Residues Cys206 and Cys210 each coordinate [4Fe-4S] cluster. Position 212 (Phe212) interacts with 5'-deoxyadenosine. Cys213 contributes to the [4Fe-4S] cluster binding site. Positions 214 and 249 each coordinate cob(II)alamin. The 5'-deoxyadenosine site is built by Gln312, Glu349, and Gly384.

It belongs to the methyltransferase superfamily. [4Fe-4S] cluster serves as cofactor. The cofactor is cob(II)alamin.

It carries out the reaction (2R,3R,5S)-2-(S-pantetheinyl)-carbapenam-3-carboxylate + AH2 + 2 S-adenosyl-L-methionine = (2R,3R,5S,6R)-6-(methyl)-2-(S-pantetheinyl)-carbapenam-3-carboxylate + 5'-deoxyadenosine + L-methionine + A + S-adenosyl-L-homocysteine + 2 H(+). The catalysed reaction is (2R,3R,5S,6R)-6-(methyl)-2-(S-pantetheinyl)-carbapenam-3-carboxylate + AH2 + 2 S-adenosyl-L-methionine = (2R,3R,5S,6R)-6-(ethyl)-2-(S-pantetheinyl)-carbapenam-3-carboxylate + 5'-deoxyadenosine + L-methionine + A + S-adenosyl-L-homocysteine + 2 H(+). The protein operates within antibiotic biosynthesis. Methyltransferase involved in the biosynthesis of the beta-lactam carbapenem antibiotic thienamycin. Catalyzes two consecutive S-adenosyl-L-methionine-dependent methylations to build out the C6-ethyl side chain in a stereocontrolled manner. In vitro can use methyl viologen and NADPH as the iron-sulfur cluster reductants. The protein is 2-(S-pantetheinyl)-carbapenam-3-carboxylate methyltransferase of Streptantibioticus cattleyicolor (strain ATCC 35852 / DSM 46488 / JCM 4925 / NBRC 14057 / NRRL 8057) (Streptomyces cattleya).